A 368-amino-acid chain; its full sequence is Alanine racemase 3 (368 aa).

Catalysis depends on Lys42, which acts as the Proton acceptor; specific for D-alanine. Position 42 is an N6-(pyridoxal phosphate)lysine (Lys42). A substrate-binding site is contributed by Arg141. Tyr262 serves as the catalytic Proton acceptor; specific for L-alanine. Met310 serves as a coordination point for substrate.

Belongs to the alanine racemase family. It depends on pyridoxal 5'-phosphate as a cofactor.

The catalysed reaction is L-alanine = D-alanine. It participates in amino-acid biosynthesis; D-alanine biosynthesis; D-alanine from L-alanine: step 1/1. Catalyzes the interconversion of L-alanine and D-alanine. May also act on other amino acids. This is Alanine racemase 3 (alr3) from Salmonella typhi.